The chain runs to 469 residues: Aspartyl/glutamyl-tRNA(Asn/Gln) amidotransferase subunit B (469 aa).

Belongs to the GatB/GatE family. GatB subfamily. As to quaternary structure, heterotrimer of A, B and C subunits.

It catalyses the reaction L-glutamyl-tRNA(Gln) + L-glutamine + ATP + H2O = L-glutaminyl-tRNA(Gln) + L-glutamate + ADP + phosphate + H(+). The enzyme catalyses L-aspartyl-tRNA(Asn) + L-glutamine + ATP + H2O = L-asparaginyl-tRNA(Asn) + L-glutamate + ADP + phosphate + 2 H(+). Its function is as follows. Allows the formation of correctly charged Asn-tRNA(Asn) or Gln-tRNA(Gln) through the transamidation of misacylated Asp-tRNA(Asn) or Glu-tRNA(Gln) in organisms which lack either or both of asparaginyl-tRNA or glutaminyl-tRNA synthetases. The reaction takes place in the presence of glutamine and ATP through an activated phospho-Asp-tRNA(Asn) or phospho-Glu-tRNA(Gln). This is Aspartyl/glutamyl-tRNA(Asn/Gln) amidotransferase subunit B from Methanococcus maripaludis (strain C6 / ATCC BAA-1332).